Consider the following 910-residue polypeptide: Protein translocase subunit SecA (910 aa).

ATP-binding positions include glutamine 86, 104-108 (GEGKT), and aspartate 499. 4 residues coordinate Zn(2+): cysteine 894, cysteine 896, cysteine 905, and histidine 906.

It belongs to the SecA family. As to quaternary structure, monomer and homodimer. Part of the essential Sec protein translocation apparatus which comprises SecA, SecYEG and auxiliary proteins SecDF-YajC and YidC. Zn(2+) is required as a cofactor.

It is found in the cell inner membrane. Its subcellular location is the cytoplasm. It carries out the reaction ATP + H2O + cellular proteinSide 1 = ADP + phosphate + cellular proteinSide 2.. Its function is as follows. Part of the Sec protein translocase complex. Interacts with the SecYEG preprotein conducting channel. Has a central role in coupling the hydrolysis of ATP to the transfer of proteins into and across the cell membrane, serving both as a receptor for the preprotein-SecB complex and as an ATP-driven molecular motor driving the stepwise translocation of polypeptide chains across the membrane. The sequence is that of Protein translocase subunit SecA from Rickettsia bellii (strain RML369-C).